The chain runs to 521 residues: Signal recognition particle protein (521 aa).

Residues 107 to 114 (GLQGSGKT), 196 to 200 (DTAGR), and 254 to 257 (TKLD) each bind GTP. Residues 436-505 (GGMGIPGMGR…MPDGLNELPP (70 aa)) are disordered. Positions 447–462 (SATRKSKGGKGKKRAR) are enriched in basic residues.

It belongs to the GTP-binding SRP family. SRP54 subfamily. As to quaternary structure, part of the signal recognition particle protein translocation system, which is composed of SRP and FtsY.

It is found in the cytoplasm. It carries out the reaction GTP + H2O = GDP + phosphate + H(+). Its function is as follows. Involved in targeting and insertion of nascent membrane proteins into the cytoplasmic membrane. Binds to the hydrophobic signal sequence of the ribosome-nascent chain (RNC) as it emerges from the ribosomes. The SRP-RNC complex is then targeted to the cytoplasmic membrane where it interacts with the SRP receptor FtsY. The sequence is that of Signal recognition particle protein from Mycobacterium leprae (strain TN).